We begin with the raw amino-acid sequence, 232 residues long: Orotate phosphoribosyltransferase (232 aa).

5-phospho-alpha-D-ribose 1-diphosphate-binding positions include arginine 107, lysine 108, lysine 111, histidine 113, and 133–141 (EDLTTAGGS). Residue threonine 137 coordinates orotate.

This sequence belongs to the purine/pyrimidine phosphoribosyltransferase family. PyrE subfamily. In terms of assembly, homodimer. It depends on Mg(2+) as a cofactor.

The catalysed reaction is orotidine 5'-phosphate + diphosphate = orotate + 5-phospho-alpha-D-ribose 1-diphosphate. Its pathway is pyrimidine metabolism; UMP biosynthesis via de novo pathway; UMP from orotate: step 1/2. Functionally, catalyzes the transfer of a ribosyl phosphate group from 5-phosphoribose 1-diphosphate to orotate, leading to the formation of orotidine monophosphate (OMP). This is Orotate phosphoribosyltransferase from Rhizobium meliloti (strain 1021) (Ensifer meliloti).